Consider the following 107-residue polypeptide: MKNAFTLLFETIKERKRNPLSESYTNYLFSKGEDKILKKIGEECTEVIIASKNNDNEELVKEMVDVMYHCFVLLAEKNISLEDIMEEVTERNGKLSRVGDRREIDTL.

Belongs to the PRA-PH family.

The protein resides in the cytoplasm. The catalysed reaction is 1-(5-phospho-beta-D-ribosyl)-ATP + H2O = 1-(5-phospho-beta-D-ribosyl)-5'-AMP + diphosphate + H(+). It participates in amino-acid biosynthesis; L-histidine biosynthesis; L-histidine from 5-phospho-alpha-D-ribose 1-diphosphate: step 2/9. The chain is Phosphoribosyl-ATP pyrophosphatase from Bacillus cereus (strain AH187).